The following is a 304-amino-acid chain: tRNA (guanine(9)-N1)-methyltransferase (304 aa).

Composition is skewed to basic and acidic residues over residues 1–26 and 42–72; these read MENK…KNET and RQQE…KRKI. The tract at residues 1-72 is disordered; the sequence is MENKDALDIG…LRKEERKRKI (72 aa). One can recognise an SAM-dependent MTase TRM10-type domain in the interval 81 to 276; it reads QKKRIRLGKV…EVIPKRKGIL (196 aa). S-adenosyl-L-methionine contacts are provided by residues L183, G203, 207–211, C215, L229, and 241–243; these read DKNRY and KIL. D207 functions as the Proton acceptor in the catalytic mechanism. Residues 282–304 form a disordered region; the sequence is SFDVSEDTRSQSNQSDSELEKEN. Phosphoserine is present on S296.

The protein belongs to the class IV-like SAM-binding methyltransferase superfamily. TRM10 family. Monomer.

The protein resides in the cytoplasm. It localises to the nucleus. The catalysed reaction is guanosine(9) in tRNA + S-adenosyl-L-methionine = N(1)-methylguanosine(9) in tRNA + S-adenosyl-L-homocysteine + H(+). S-adenosyl-L-methionine-dependent guanine N(1)-methyltransferase that catalyzes the formation of N(1)-methylguanine at position 9 (m1G9) in cytoplasmic tRNA. In Schizosaccharomyces pombe (strain 972 / ATCC 24843) (Fission yeast), this protein is tRNA (guanine(9)-N1)-methyltransferase.